We begin with the raw amino-acid sequence, 508 residues long: Abl interactor 1 (508 aa).

Ala2 is modified (N-acetylalanine). The interval 18 to 79 is required for binding to WASF1; that stretch reads ALIESYQNLT…NNVLQLLDIQ (62 aa). The region spanning 45-107 is the t-SNARE coiled-coil homology domain; it reads KALEETKAYT…DIHKEKVARR (63 aa). Tyr53 is modified (phosphotyrosine). Disordered regions lie at residues 159 to 290, 306 to 375, and 388 to 421; these read KHGN…APPL, APGS…LTPQ, and NIAD…PVDY. The span at 161–175 shows a compositional bias: polar residues; the sequence is GNNQPARTGTLSRTN. Residues Thr174 and Thr178 each carry the phosphothreonine modification. Ser183 and Ser187 each carry phosphoserine. Tyr213 carries the post-translational modification Phosphotyrosine; by ABL1. At Thr215 the chain carries Phosphothreonine. Residues Ser216, Ser222, and Ser225 each carry the phosphoserine modification. The span at 222-235 shows a compositional bias: polar residues; it reads SQHSPGRTASLNQR. Low complexity predominate over residues 248 to 258; the sequence is SRENSGSSSIG. Pro residues predominate over residues 278–290; the sequence is VPPPSGAPPAPPL. Residues 307–322 show a composition bias toward polar residues; sequence PGSQYGTMTRQISRHN. Phosphoserine occurs at positions 319 and 323. Residues 337–347 are compositionally biased toward polar residues; sequence PSVTAQFSAQP. Pro residues-rich tracts occupy residues 393–403 and 410–419; these read PTPPPPPPPDD and SPPPPPPPPV. The 60-residue stretch at 446-505 folds into the SH3 domain; that stretch reads NYIEKVVAIYDYTKDKDDELSFMEGAIIYVIKKNDDGWYEGVCNRVTGLFPGNYVESIMH. Tyr455 carries the phosphotyrosine modification. The residue at position 466 (Ser466) is a Phosphoserine. Position 507 is a phosphothreonine (Thr507).

This sequence belongs to the ABI family. As to quaternary structure, interacts with ABL1, ENAH, STX1A, SNAP25, VAMP2, EPS8, and through its N-terminus with WASF1. Part of a complex consisting of ABI1, STX1A and SNAP25. Part of a complex consisting of ABI1, EPS8 and SOS1. Interacts with SOS1, SOS2, GRB2, SPTA1 and the first SH3 domain of NCK1. Isoform 6 does not interact with NCK1. Component of the WAVE2 complex composed of ABI1, CYFIP1/SRA1, NCKAP1/NAP1 (NCKAP1l/HEM1 in hematopoietic cells) and WASF2/WAVE2. Interacts (via SH3 domain) with SHANK2 and SHANK3, but not SHANK1; the interaction is direct. Interacts with the heterodimer MYC:MAX; the interaction may enhance MYC:MAX transcriptional activity. Interacts with FNBP1L (via the SH3 domain), WASF2, and CDC42, but only in the presence of FNBP1L. In terms of assembly, (Microbial infection) Interacts with human cytomegalovirus/HHV-5 protein UL135. In terms of processing, phosphorylated on tyrosine residues after serum stimulation or induction by v-Abl. Seems to be phosphorylated at Tyr-53 by ABL1, required for nuclear but not for synaptic localization. In terms of tissue distribution, widely expressed, with highest expression in brain.

Its subcellular location is the cytoplasm. The protein localises to the nucleus. It is found in the cell projection. The protein resides in the lamellipodium. It localises to the filopodium. Its subcellular location is the growth cone. The protein localises to the postsynaptic density. It is found in the cytoskeleton. In terms of biological role, may act in negative regulation of cell growth and transformation by interacting with nonreceptor tyrosine kinases ABL1 and/or ABL2. May play a role in regulation of EGF-induced Erk pathway activation. Involved in cytoskeletal reorganization and EGFR signaling. Together with EPS8 participates in transduction of signals from Ras to Rac. In vitro, a trimeric complex of ABI1, EPS8 and SOS1 exhibits Rac specific guanine nucleotide exchange factor (GEF) activity and ABI1 seems to act as an adapter in the complex. Regulates ABL1/c-Abl-mediated phosphorylation of ENAH. Recruits WASF1 to lamellipodia and there seems to regulate WASF1 protein level. In brain, seems to regulate the dendritic outgrowth and branching as well as to determine the shape and number of synaptic contacts of developing neurons. The sequence is that of Abl interactor 1 from Homo sapiens (Human).